A 573-amino-acid polypeptide reads, in one-letter code: Heat shock protein 60A (573 aa).

The N-terminal 57 residues, Met1 to Asn57, are a transit peptide targeting the mitochondrion.

Belongs to the chaperonin (HSP60) family.

Its subcellular location is the mitochondrion matrix. Prevents misfolding and promotes the refolding and proper assembly of unfolded polypeptides generated under stress conditions. This is Heat shock protein 60A from Drosophila melanogaster (Fruit fly).